The primary structure comprises 266 residues: Ubiquinone biosynthesis protein COQ4 homolog, mitochondrial (266 aa).

Residues His169, Asp170, His173, and Glu185 each contribute to the Zn(2+) site.

It belongs to the COQ4 family. Component of a multi-subunit COQ enzyme complex. It depends on Zn(2+) as a cofactor.

It localises to the mitochondrion inner membrane. It catalyses the reaction a 4-hydroxy-3-methoxy-5-(all-trans-polyprenyl)benzoate + H(+) = a 2-methoxy-6-(all-trans-polyprenyl)phenol + CO2. The protein operates within cofactor biosynthesis; ubiquinone biosynthesis. Its function is as follows. Lyase that catalyzes the C1-decarboxylation of 4-hydroxy-3-methoxy-5-(all-trans-polyprenyl)benzoic acid into 2-methoxy-6-(all-trans-polyprenyl)phenol during ubiquinone biosynthesis. The sequence is that of Ubiquinone biosynthesis protein COQ4 homolog, mitochondrial from Drosophila ananassae (Fruit fly).